Reading from the N-terminus, the 220-residue chain is Polyadenylate-binding protein 2 (220 aa).

The interval 1-24 (MEEEEHEVYGGEIPDVGEMDGDME) is disordered. Residues 34 to 74 (AADDDAVKELDEMKKRLKEMEDEAAALREMQAKVEKEMGAQ) adopt a coiled-coil conformation. The tract at residues 78–219 (SIAANQAGKE…FRRPMRYMPY (142 aa)) is necessary for homooligomerization. In terms of domain architecture, RRM spans 92-168 (RSVFVGNVDY…RQLKVLQKRT (77 aa)). Residues 165-172 (QKRTNVPG) carry the Nuclear localization signal motif.

As to quaternary structure, monomer and homooligomer. Binds RNA as a monomer and oligomerizes when bound to poly(A). Forms a complex with cleavage and polyadenylation specificity factor (CPSF) subunits PAPS2, FIPS5, PABN3 and PABN1. Interacts with CSP3.

Its subcellular location is the nucleus speckle. The protein localises to the cytoplasm. Its function is as follows. Involved in the 3'-end formation of mRNA precursors (pre-mRNA) by the addition of a poly(A) tail of 200-250 nt to the upstream cleavage product. Stimulates poly(A) polymerase (PAPOLA) conferring processivity on the poly(A) tail elongation reaction and also controls the poly(A) tail length. Increases the affinity of poly(A) polymerase for RNA. Binds to poly(A) and to poly(G) with high affinity. May protect the poly(A) tail from degradation. The polypeptide is Polyadenylate-binding protein 2 (Arabidopsis thaliana (Mouse-ear cress)).